Here is a 448-residue protein sequence, read N- to C-terminus: MKHRYLPATEQDKKEMLKAIGAETIDELFADIPENVRFQKDYQIKKAKSETELTRELTKLAAKNKDAVTYASFLGAGVYDHYQPVIVDHVISRSEFYTAYTPYQPEISQGELQAIFEFQTMICELTGMDIANSSMYDGGTALAEAAMLASGHTKKKKIVISAAVHPESRDVLKTYAKGQYIEVVEVPAKNGVTDLEALEHAVCDETAAVIVQYPNFFGQIEPLKDIEPLAHKGNSQLIVSSNPLALGILTPPGAYGADIVVGDAQPFGIPAAFGGPHCGYFAVTKKLMRKVPGRLVGQTEDENGRRGFVLTLQAREQHIRRDKATSNICSNQALNALAASAAMTALGKNGVKDMARQNILKADYARRQAEKAGLHVAFDGPIFNEFAVRLNLPVKEANRRLLQDGIIGGYDLGLAYPELNQHMLIAVTELRTKEKIDSLIARLGDQHE.

The protein belongs to the GcvP family. N-terminal subunit subfamily. As to quaternary structure, the glycine cleavage system is composed of four proteins: P, T, L and H. In this organism, the P 'protein' is a heterodimer of two subunits.

The enzyme catalyses N(6)-[(R)-lipoyl]-L-lysyl-[glycine-cleavage complex H protein] + glycine + H(+) = N(6)-[(R)-S(8)-aminomethyldihydrolipoyl]-L-lysyl-[glycine-cleavage complex H protein] + CO2. Its function is as follows. The glycine cleavage system catalyzes the degradation of glycine. The P protein binds the alpha-amino group of glycine through its pyridoxal phosphate cofactor; CO(2) is released and the remaining methylamine moiety is then transferred to the lipoamide cofactor of the H protein. This Bacillus velezensis (strain DSM 23117 / BGSC 10A6 / LMG 26770 / FZB42) (Bacillus amyloliquefaciens subsp. plantarum) protein is Probable glycine dehydrogenase (decarboxylating) subunit 1.